Consider the following 224-residue polypeptide: Oxygen-evolving enhancer protein 3-1, chloroplastic (224 aa).

The N-terminal 44 residues, 1 to 44 (MASMGGLHGASPAVLEGSLKINGSSRLNGSGRVAVAQRSRLVVR), are a transit peptide targeting the chloroplast. Residues 45–75 (AQQSEETSRRSVIGLVAAGLAGGSFVQAVLA) constitute a thylakoid transit peptide. T189 bears the Phosphothreonine mark. The residue at position 209 (Y209) is a Phosphotyrosine. T212 carries the post-translational modification Phosphothreonine.

It belongs to the PsbQ family. In terms of tissue distribution, expressed in green tissue, with high steady-state mRNA levels in leaves. Not expressed in roots.

Its subcellular location is the plastid. It is found in the chloroplast thylakoid membrane. Its function is as follows. Required for photosystem II assembly/stability and photoautotrophic growth under low light conditions. This is Oxygen-evolving enhancer protein 3-1, chloroplastic (PSBQ1) from Arabidopsis thaliana (Mouse-ear cress).